We begin with the raw amino-acid sequence, 152 residues long: Single-stranded DNA-binding protein, mitochondrial (152 aa).

A mitochondrion-targeting transit peptide spans 1 to 16 (MFRRPVLQVFRQFVRH). The SSB domain occupies 30-141 (LNRVQLLGRV…IIAGKKLVVH (112 aa)). Phosphoserine is present on residues Ser67 and Ser79. Lys113 is modified (N6-acetyllysine). An N6-succinyllysine modification is found at Lys122.

As to quaternary structure, homotetramer. Interacts with MPG/AAG, through inhibition of its glycosylase activity it potentially prevents formation of DNA breaks in ssDNA, ensuring that base removal primarily occurs in dsDNA. Interacts with POLDIP2. Interacts with PRIMPOL. Expressed in all the layers of the retina (at protein level).

The protein resides in the mitochondrion. It localises to the mitochondrion matrix. Its subcellular location is the mitochondrion nucleoid. Binds preferentially and cooperatively to pyrimidine rich single-stranded DNA (ss-DNA). In vitro, required to maintain the copy number of mitochondrial DNA (mtDNA) and plays a crucial role during mtDNA replication by stimulating the activity of the replisome components POLG and TWNK at the replication fork. Promotes the activity of the gamma complex polymerase POLG, largely by organizing the template DNA and eliminating secondary structures to favor ss-DNA conformations that facilitate POLG activity. In addition it is able to promote the 5'-3' unwinding activity of the mtDNA helicase TWNK. May also function in mtDNA repair. The sequence is that of Single-stranded DNA-binding protein, mitochondrial (Ssbp1) from Mus musculus (Mouse).